Reading from the N-terminus, the 600-residue chain is Integrator complex subunit 11 (600 aa).

Positions 68, 70, 72, 73, 157, and 178 each coordinate Zn(2+). The HXHXDH motif motif lies at 68–73 (HFHLDH). Glu-203 is a catalytic residue. Residue Lys-381 forms a Glycyl lysine isopeptide (Lys-Gly) (interchain with G-Cter in SUMO) linkage. His-414 provides a ligand contact to Zn(2+). Glycyl lysine isopeptide (Lys-Gly) (interchain with G-Cter in SUMO) cross-links involve residues Lys-462 and Lys-475. The short motif at 469–479 (LLPEAKKPRLL) is the Nuclear localization signal element.

This sequence belongs to the metallo-beta-lactamase superfamily. RNA-metabolizing metallo-beta-lactamase-like family. INTS11 subfamily. As to quaternary structure, component of the Integrator complex, composed of core subunits INTS1, INTS2, INTS3, INTS4, INTS5, INTS6, INTS7, INTS8, INTS9/RC74, INTS10, INTS11/CPSF3L, INTS12, INTS13, INTS14 and INTS15. The core complex associates with protein phosphatase 2A subunits PPP2CA and PPP2R1A, to form the Integrator-PP2A (INTAC) complex. INTS11 is part of the RNA endonuclease subcomplex, composed of INTS4, INTS9, INTS11 and inositol hexakisphosphate (InsP6). Interacts with WDR73; interaction is required for the assembly of the RNA endonuclease subcomplex in the cytoplasm. Interacts with BRAT1; interaction is required for the assembly of the RNA endonuclease subcomplex and inhibits the endonuclease activity of INTS11 before formation of mature integrator complex. Requires Zn(2+) as cofactor. Sumoylated; sumoylation regulates its subcellular location and is required for integrator complex integrity.

Its subcellular location is the nucleus. The protein localises to the cytoplasm. Its activity is regulated as follows. The RNA endonuclease activity is inhibited by BRAT1 that forms hyrogen bond and hydrophobic interactions with the active site. RNA endonuclease component of the integrator complex, a multiprotein complex that terminates RNA polymerase II (Pol II) transcription in the promoter-proximal region of genes. The integrator complex provides a quality checkpoint during transcription elongation by driving premature transcription termination of transcripts that are unfavorably configured for transcriptional elongation: the complex terminates transcription by (1) catalyzing dephosphorylation of the C-terminal domain (CTD) of Pol II subunit POLR2A/RPB1 and SUPT5H/SPT5, (2) degrading the exiting nascent RNA transcript via endonuclease activity and (3) promoting the release of Pol II from bound DNA. The integrator complex is also involved in terminating the synthesis of non-coding Pol II transcripts, such as enhancer RNAs (eRNAs), small nuclear RNAs (snRNAs), telomerase RNAs and long non-coding RNAs (lncRNAs). Within the integrator complex, INTS11 constitutes the RNA endonuclease subunit that degrades exiting nascent RNA transcripts. Mediates recruitment of cytoplasmic dynein to the nuclear envelope, probably as component of the integrator complex. The sequence is that of Integrator complex subunit 11 from Mus musculus (Mouse).